The sequence spans 178 residues: Cytochrome b6-f complex iron-sulfur subunit 3 (178 aa).

Residues 20 to 42 (FITGATVAVTAGAALYPAGKFLI) traverse the membrane as a helical segment. The 97-residue stretch at 65-161 (PASQILAEPP…VAVIDNSILI (97 aa)) folds into the Rieske domain. 4 residues coordinate [2Fe-2S] cluster: Cys-107, His-109, Cys-125, and His-128. Cys-112 and Cys-127 are oxidised to a cystine.

The protein belongs to the Rieske iron-sulfur protein family. As to quaternary structure, the 4 large subunits of the cytochrome b6-f complex are cytochrome b6, subunit IV (17 kDa polypeptide, PetD), cytochrome f and the Rieske protein, while the 4 small subunits are PetG, PetL, PetM and PetN. The complex functions as a dimer. The cofactor is [2Fe-2S] cluster.

The protein localises to the cellular thylakoid membrane. The catalysed reaction is 2 oxidized [plastocyanin] + a plastoquinol + 2 H(+)(in) = 2 reduced [plastocyanin] + a plastoquinone + 4 H(+)(out). In terms of biological role, component of the cytochrome b6-f complex, which mediates electron transfer between photosystem II (PSII) and photosystem I (PSI), cyclic electron flow around PSI, and state transitions. The sequence is that of Cytochrome b6-f complex iron-sulfur subunit 3 from Nostoc sp. (strain PCC 7120 / SAG 25.82 / UTEX 2576).